A 145-amino-acid polypeptide reads, in one-letter code: MIIVCASCGAKNRVPEEKLAVHPNCGQCHQALLPLEPIELNEQNFSNFISNSDLPVLIDLWAEWCGPCKMMAPHFAQVAKQNPYVVFAKIDTEANPRLSAAFNVRSIPTLVLMNKTTEVARISGALRTLELQQWLDQQLQQQQGN.

3 residues coordinate heme: Cys-25, Cys-28, and His-29. The region spanning 29 to 140 (HQALLPLEPI…LQQWLDQQLQ (112 aa)) is the Thioredoxin domain. The cysteines at positions 65 and 68 are disulfide-linked.

The protein belongs to the thioredoxin family.

Its function is as follows. Participates in various redox reactions through the reversible oxidation of its active center dithiol to a disulfide and catalyzes dithiol-disulfide exchange reactions. The protein is Thioredoxin C-3 of Corynebacterium nephridii.